Consider the following 415-residue polypeptide: Multifunctional CCA protein (415 aa).

Residues G8 and R11 each coordinate ATP. Positions 8 and 11 each coordinate CTP. Residues D21 and D23 each contribute to the Mg(2+) site. Residues R91, R137, and R140 each contribute to the ATP site. The CTP site is built by R91, R137, and R140. The 102-residue stretch at 228–329 folds into the HD domain; it reads TGIHTLMTLA…VGLFDSIDAW (102 aa).

This sequence belongs to the tRNA nucleotidyltransferase/poly(A) polymerase family. Bacterial CCA-adding enzyme type 1 subfamily. In terms of assembly, monomer. Can also form homodimers and oligomers. The cofactor is Mg(2+). Ni(2+) serves as cofactor.

The catalysed reaction is a tRNA precursor + 2 CTP + ATP = a tRNA with a 3' CCA end + 3 diphosphate. It catalyses the reaction a tRNA with a 3' CCA end + 2 CTP + ATP = a tRNA with a 3' CCACCA end + 3 diphosphate. In terms of biological role, catalyzes the addition and repair of the essential 3'-terminal CCA sequence in tRNAs without using a nucleic acid template. Adds these three nucleotides in the order of C, C, and A to the tRNA nucleotide-73, using CTP and ATP as substrates and producing inorganic pyrophosphate. tRNA 3'-terminal CCA addition is required both for tRNA processing and repair. Also involved in tRNA surveillance by mediating tandem CCA addition to generate a CCACCA at the 3' terminus of unstable tRNAs. While stable tRNAs receive only 3'-terminal CCA, unstable tRNAs are marked with CCACCA and rapidly degraded. The chain is Multifunctional CCA protein from Cronobacter sakazakii (strain ATCC BAA-894) (Enterobacter sakazakii).